Reading from the N-terminus, the 545-residue chain is Gamma-curcumene synthase (545 aa).

Residues Asp-299, Asp-303, Asn-442, and Glu-450 each coordinate Mg(2+). The DDXXD motif signature appears at 299–303 (DDTYD).

The protein belongs to the terpene synthase family. Mg(2+) is required as a cofactor.

Its subcellular location is the cytoplasm. The protein localises to the cytosol. It carries out the reaction (2E,6E)-farnesyl diphosphate = gamma-curcumene + diphosphate. Its pathway is secondary metabolite biosynthesis; terpenoid biosynthesis. Sesquiterpene synthase involved in gamma-curcumene biosynthesis. In Pogostemon cablin (Patchouli), this protein is Gamma-curcumene synthase.